Consider the following 310-residue polypeptide: tRNA-cytidine(32) 2-sulfurtransferase (310 aa).

The PP-loop motif signature appears at 58 to 63; sequence SGGKDS. [4Fe-4S] cluster contacts are provided by Cys-133, Cys-136, and Cys-224.

This sequence belongs to the TtcA family. Homodimer. It depends on Mg(2+) as a cofactor. The cofactor is [4Fe-4S] cluster.

It localises to the cytoplasm. It carries out the reaction cytidine(32) in tRNA + S-sulfanyl-L-cysteinyl-[cysteine desulfurase] + AH2 + ATP = 2-thiocytidine(32) in tRNA + L-cysteinyl-[cysteine desulfurase] + A + AMP + diphosphate + H(+). The protein operates within tRNA modification. Functionally, catalyzes the ATP-dependent 2-thiolation of cytidine in position 32 of tRNA, to form 2-thiocytidine (s(2)C32). The sulfur atoms are provided by the cysteine/cysteine desulfurase (IscS) system. This chain is tRNA-cytidine(32) 2-sulfurtransferase, found in Paracidovorax citrulli (strain AAC00-1) (Acidovorax citrulli).